A 438-amino-acid chain; its full sequence is Ribosomal protein uS12 methylthiotransferase RimO (438 aa).

Residues 6–118 form the MTTase N-terminal domain; the sequence is KQLCLISLGC…IDILIAKKQN (113 aa). [4Fe-4S] cluster-binding residues include Cys15, Cys49, Cys81, Cys150, Cys154, and Cys157. The 229-residue stretch at 136–364 folds into the Radical SAM core domain; that stretch reads TGSSVHAYVK…NKIALKHQHN (229 aa).

It belongs to the methylthiotransferase family. RimO subfamily. The cofactor is [4Fe-4S] cluster.

It is found in the cytoplasm. The catalysed reaction is L-aspartate(89)-[ribosomal protein uS12]-hydrogen + (sulfur carrier)-SH + AH2 + 2 S-adenosyl-L-methionine = 3-methylsulfanyl-L-aspartate(89)-[ribosomal protein uS12]-hydrogen + (sulfur carrier)-H + 5'-deoxyadenosine + L-methionine + A + S-adenosyl-L-homocysteine + 2 H(+). Its function is as follows. Catalyzes the methylthiolation of an aspartic acid residue of ribosomal protein uS12. This Helicobacter acinonychis (strain Sheeba) protein is Ribosomal protein uS12 methylthiotransferase RimO.